Here is a 954-residue protein sequence, read N- to C-terminus: Patched domain-containing protein 3 (954 aa).

Over residues 1 to 20 the composition is skewed to basic and acidic residues; the sequence is MPWVEPKPRPGPEQKPKLTK. Positions 1 to 103 are disordered; the sequence is MPWVEPKPRP…APLPEEETPE (103 aa). The segment covering 42–57 has biased composition (pro residues); sequence QPPPGPLAPPKSPEPS. Residues 90-102 are compositionally biased toward acidic residues; it reads ELDDAPLPEEETP. Residues 139–159 form a helical membrane-spanning segment; that stretch reads WIFLLAPLMLTAALGTGFLYL. 3 N-linked (GlcNAc...) asparagine glycosylation sites follow: Asn-192, Asn-275, and Asn-279. 7 consecutive transmembrane segments (helical) span residues 297–317, 383–403, 423–443, 447–467, 486–506, 520–540, and 603–623; these read LTGF…QLLL, VIPV…TSCF, FLAV…FVII, SPFL…SAWH, AAVS…TGIM, GMTL…FMAL, and YFVV…CFHV. The SSD domain maps to 383 to 540; the sequence is VIPVFHLAYI…ITCFGAFMAL (158 aa). 3 N-linked (GlcNAc...) asparagine glycosylation sites follow: Asn-678, Asn-692, and Asn-737. 5 consecutive transmembrane segments (helical) span residues 804–824, 826–846, 858–878, 894–914, and 927–947; these read VLVA…YPLC, LWVT…MAFW, LVIC…AFVS, LLGY…CVLA, and IMFL…PVFL.

This sequence belongs to the patched family. Expressed in germ cells of the testis (at protein level). Detected in blood lymph, colon, small intestine, ovary, testis, prostate, thymus and spleen with highest levels in testis.

The protein localises to the cell projection. It localises to the cilium. Its subcellular location is the flagellum membrane. It is found in the endoplasmic reticulum membrane. May play a role in sperm development or sperm function. However, does not appear to have an essential role in spermatogenesis or male fertility. This is Patched domain-containing protein 3 (PTCHD3) from Homo sapiens (Human).